The primary structure comprises 535 residues: uncharacterized protein (535 aa).

The segment at Met-1 to Lys-34 is disordered. Positions His-15–Lys-34 are enriched in basic and acidic residues.

This is an uncharacterized protein from Escherichia coli (strain K12).